Consider the following 139-residue polypeptide: Ribulose bisphosphate carboxylase small subunit, plasmid (139 aa).

Belongs to the RuBisCO small chain family. As to quaternary structure, heterohexadecamer of 8 large and 8 small subunits.

In terms of biological role, ruBisCO catalyzes two reactions: the carboxylation of D-ribulose 1,5-bisphosphate, the primary event in carbon dioxide fixation, as well as the oxidative fragmentation of the pentose substrate. Both reactions occur simultaneously and in competition at the same active site. Although the small subunit is not catalytic it is essential for maximal activity. The sequence is that of Ribulose bisphosphate carboxylase small subunit, plasmid from Cupriavidus necator (strain ATCC 17699 / DSM 428 / KCTC 22496 / NCIMB 10442 / H16 / Stanier 337) (Ralstonia eutropha).